A 452-amino-acid chain; its full sequence is Phosphoglucosamine mutase (452 aa).

Residue S112 is the Phosphoserine intermediate of the active site. Mg(2+)-binding residues include S112, D251, D253, and D255. Position 112 is a phosphoserine (S112).

Belongs to the phosphohexose mutase family. It depends on Mg(2+) as a cofactor. Activated by phosphorylation.

The catalysed reaction is alpha-D-glucosamine 1-phosphate = D-glucosamine 6-phosphate. Functionally, catalyzes the conversion of glucosamine-6-phosphate to glucosamine-1-phosphate. This is Phosphoglucosamine mutase from Bordetella pertussis (strain Tohama I / ATCC BAA-589 / NCTC 13251).